A 262-amino-acid chain; its full sequence is 3-methyl-2-oxobutanoate hydroxymethyltransferase (262 aa).

Positions 44 and 83 each coordinate Mg(2+). 3-methyl-2-oxobutanoate-binding positions include 44–45 (DS), Asp83, and Lys112. Glu114 is a Mg(2+) binding site. Catalysis depends on Glu177, which acts as the Proton acceptor.

The protein belongs to the PanB family. Homodecamer; pentamer of dimers. It depends on Mg(2+) as a cofactor.

It is found in the cytoplasm. It carries out the reaction 3-methyl-2-oxobutanoate + (6R)-5,10-methylene-5,6,7,8-tetrahydrofolate + H2O = 2-dehydropantoate + (6S)-5,6,7,8-tetrahydrofolate. It participates in cofactor biosynthesis; coenzyme A biosynthesis. Functionally, catalyzes the reversible reaction in which hydroxymethyl group from 5,10-methylenetetrahydrofolate is transferred onto alpha-ketoisovalerate to form ketopantoate. In Metallosphaera sedula (strain ATCC 51363 / DSM 5348 / JCM 9185 / NBRC 15509 / TH2), this protein is 3-methyl-2-oxobutanoate hydroxymethyltransferase.